Reading from the N-terminus, the 205-residue chain is Recombination protein RecR (205 aa).

The segment at 59–74 (CAMCNTFCEGGLCDIC) adopts a C4-type zinc-finger fold. Residues 82–177 (RRLMVVHMPA…KVSRLSQGIP (96 aa)) form the Toprim domain.

This sequence belongs to the RecR family.

In terms of biological role, may play a role in DNA repair. It seems to be involved in an RecBC-independent recombinational process of DNA repair. It may act with RecF and RecO. The sequence is that of Recombination protein RecR from Neisseria meningitidis serogroup C (strain 053442).